The chain runs to 60 residues: UI (60 aa).

Over residues 1–14 (AAAAGDSAASDLLG) the composition is skewed to low complexity. A disordered region spans residues 1–22 (AAAAGDSAASDLLGDNILRSED). V60 is subject to Valine amide.

This sequence belongs to the sauvagine/corticotropin-releasing factor/urotensin I family.

The protein resides in the secreted. Urotensin is found in the teleost caudal neurosecretory system. It has a suggested role in osmoregulation and as a corticotropin-releasing factor. The non-hormonal portion of this precursor may be a urotensin binding protein, urophysin. The chain is UI from Platichthys flesus (European flounder).